A 476-amino-acid polypeptide reads, in one-letter code: Ribulose bisphosphate carboxylase/oxygenase activase 1, chloroplastic (476 aa).

Residues 1 to 56 (MAAAYSTVGAVNRAPLSLNGSGARASLVPSTAFFGSSLKKSAAKFPKASSGNFKIV) constitute a chloroplast transit peptide. Position 165-172 (165-172 (GGKGQGKS)) interacts with ATP.

Belongs to the RuBisCO activase family.

Its subcellular location is the plastid. The protein resides in the chloroplast stroma. Activation of RuBisCO (ribulose-1,5-bisphosphate carboxylase/oxygenase; EC 4.1.1.39) involves the ATP-dependent carboxylation of the epsilon-amino group of lysine leading to a carbamate structure. The polypeptide is Ribulose bisphosphate carboxylase/oxygenase activase 1, chloroplastic (RCA1) (Larrea tridentata (Creosote bush)).